We begin with the raw amino-acid sequence, 461 residues long: Ribitol-5-phosphate transferase FKTN (461 aa).

The Cytoplasmic portion of the chain corresponds to 1-7 (MSRINKN). The tract at residues 6-27 (KNVVLALLTLTSSAFLLFQLYY) is required and sufficient for interaction with POMGNT1. Residues 8–28 (VVLALLTLTSSAFLLFQLYYY) form a helical; Signal-anchor for type II membrane protein membrane-spanning segment. The Lumenal portion of the chain corresponds to 29–461 (KHYLSTRNGA…SEWDEVIQLY (433 aa)). An N-linked (GlcNAc...) asparagine glycan is attached at asparagine 92.

It belongs to the LicD transferase family. In terms of assembly, forms a complex composed of FKTN/fukutin, FKRP and RXYLT1/TMEM5. Interacts (via transmembrane domain) with POMGNT1; the interaction is direct and is required for normal POMGNT1 location in Golgi membranes. Expressed in the retina (at protein level).

The protein resides in the golgi apparatus membrane. It is found in the cytoplasm. It localises to the nucleus. The enzyme catalyses 3-O-[beta-D-GalNAc-(1-&gt;3)-beta-D-GlcNAc-(1-&gt;4)-(O-6-P-alpha-D-Man)]-Thr-[protein] + CDP-L-ribitol = 3-O-[Rib-ol-P-3-beta-D-GalNAc-(1-&gt;3)-beta-D-GlcNAc-(1-&gt;4)-(O-6-P-alpha-D-Man)]-Thr-[protein] + CMP + H(+). It participates in protein modification; protein glycosylation. In terms of biological role, catalyzes the transfer of CDP-ribitol to the distal N-acetylgalactosamine of the phosphorylated O-mannosyl trisaccharide (N-acetylgalactosamine-beta-3-N-acetylglucosamine-beta-4-(phosphate-6-)mannose), a carbohydrate structure present in alpha-dystroglycan (DAG1). This constitutes the first step in the formation of the ribitol 5-phosphate tandem repeat which links the phosphorylated O-mannosyl trisaccharide to the ligand binding moiety composed of repeats of 3-xylosyl-alpha-1,3-glucuronic acid-beta-1. May interact with and reinforce a large complex encompassing the outside and inside of muscle membranes. Could be involved in brain development. The protein is Ribitol-5-phosphate transferase FKTN of Macaca fascicularis (Crab-eating macaque).